Consider the following 161-residue polypeptide: Ecotin (161 aa).

An N-terminal signal peptide occupies residues 1 to 23 (MGNFTVRATAGLMLASLSTLAHA). Cys69 and Cys106 are joined by a disulfide.

This sequence belongs to the protease inhibitor I11 (ecotin) family. In terms of assembly, homodimer.

It localises to the periplasm. General inhibitor of family S1 serine proteases. This Pseudomonas fluorescens (strain Pf0-1) protein is Ecotin.